Consider the following 176-residue polypeptide: Small ribosomal subunit protein uS5c (176 aa).

The S5 DRBM domain occupies 26–89 (LVERLIKISR…TDGRKNLIEL (64 aa)).

This sequence belongs to the universal ribosomal protein uS5 family. In terms of assembly, part of the 30S ribosomal subunit. Contacts protein S4.

It is found in the plastid. Its subcellular location is the chloroplast. Its function is as follows. With S4 and S12 plays an important role in translational accuracy. The sequence is that of Small ribosomal subunit protein uS5c (rps5) from Phaeodactylum tricornutum (strain CCAP 1055/1).